Reading from the N-terminus, the 177-residue chain is Large ribosomal subunit protein uL10 (177 aa).

Belongs to the universal ribosomal protein uL10 family. In terms of assembly, part of the ribosomal stalk of the 50S ribosomal subunit. The N-terminus interacts with L11 and the large rRNA to form the base of the stalk. The C-terminus forms an elongated spine to which L12 dimers bind in a sequential fashion forming a multimeric L10(L12)X complex.

Functionally, forms part of the ribosomal stalk, playing a central role in the interaction of the ribosome with GTP-bound translation factors. This chain is Large ribosomal subunit protein uL10, found in Leptospira interrogans serogroup Icterohaemorrhagiae serovar copenhageni (strain Fiocruz L1-130).